We begin with the raw amino-acid sequence, 229 residues long: Glucose-induced degradation protein 8-B homolog (229 aa).

The 33-residue stretch at 26 to 58 (QRADMNRLIMNYLVTEGFKEAAEKFRMESGIEP) folds into the LisH domain. The CTLH domain maps to 64-121 (SLDERIKIREMVLKGQIQEAIALINSLHPELLDTNRYLYFHLQQQHLIELIRLRETEA).

In terms of assembly, identified in the CTLH complex that contains at least MAEA, RMND5A (or alternatively its paralog RMND5B), GID8, WDR26, and RANBP9 and/or RANBP10. Interacts with CTNNB1.

It localises to the cytoplasm. It is found in the nucleus. In terms of biological role, core component of the CTLH E3 ubiquitin-protein ligase complex that selectively accepts ubiquitin from UBE2H and mediates ubiquitination and subsequent proteasomal degradation of target proteins. Acts as a positive regulator of Wnt signaling pathway by promoting beta-catenin (CTNNB1) nuclear accumulation. Required for normal Wnt signaling and normal dorsoventral patterning during embryogenesis. This chain is Glucose-induced degradation protein 8-B homolog (gid8b), found in Danio rerio (Zebrafish).